We begin with the raw amino-acid sequence, 160 residues long: MRPRPPAMRTKRRYILARILPYRARVDQKQMYFAVIEAATSLLGDAAAGLAQPAVVFCEGGYVVVRCRRGTEKDVAVALSTVTAVADERIALRTVATSGTIHALRRRMRSIRQLPGDEEVKIGETYFAVYRYPRQKVDLVEKGIKHQKSLFFTEADLEER.

It belongs to the eukaryotic/archaeal RNase P protein component 2 family. In terms of assembly, consists of a catalytic RNA component and at least 4-5 protein subunits.

It localises to the cytoplasm. The enzyme catalyses Endonucleolytic cleavage of RNA, removing 5'-extranucleotides from tRNA precursor.. In terms of biological role, part of ribonuclease P, a protein complex that generates mature tRNA molecules by cleaving their 5'-ends. This chain is Ribonuclease P protein component 2, found in Methanoculleus marisnigri (strain ATCC 35101 / DSM 1498 / JR1).